Consider the following 128-residue polypeptide: 3-aminoacrylate deaminase RutC (128 aa).

It belongs to the RutC family.

The catalysed reaction is (Z)-3-aminoacrylate + H2O + H(+) = 3-oxopropanoate + NH4(+). In terms of biological role, involved in pyrimidine catabolism. Catalyzes the deamination of 3-aminoacrylate to malonic semialdehyde, a reaction that can also occur spontaneously. RutC may facilitate the reaction and modulate the metabolic fitness, rather than catalyzing essential functions. This Enterobacter sp. (strain 638) protein is 3-aminoacrylate deaminase RutC.